A 545-amino-acid polypeptide reads, in one-letter code: POTE ankyrin domain family member H (545 aa).

ANK repeat units lie at residues Leu180–Lys208, Gln209–Ile238, Lys242–Ile271, Tyr275–Ser304, His308–Ala337, Tyr341–Ser370, and Ser374–Lys404. Positions Ser406–Gly524 are disordered. Basic and acidic residues-rich tracts occupy residues Gln414–Gly429 and Glu443–Lys458. Positions Thr513–Gly524 are enriched in polar residues.

It belongs to the POTE family.

The polypeptide is POTE ankyrin domain family member H (POTEH) (Homo sapiens (Human)).